The sequence spans 288 residues: uncharacterized protein (288 aa).

NAD(+) is bound by residues 6–20 (GFIG…MASH) and T97. K172 is a catalytic residue. K240 is a binding site for NAD(+).

Belongs to the HIBADH-related family.

It is found in the cell membrane. Its subcellular location is the membrane raft. This is an uncharacterized protein from Bacillus subtilis (strain 168).